Consider the following 287-residue polypeptide: Probable F-box protein At5g04010 (287 aa).

The 52-residue stretch at 50–101 (PSPPSWEILCLVGPYMDPESLAVASCVSTTWSKCFSSEDLWKSLPATRHSIF) folds into the F-box; degenerate domain.

The polypeptide is Probable F-box protein At5g04010 (NSFBx) (Arabidopsis thaliana (Mouse-ear cress)).